The primary structure comprises 143 residues: MTRTVIAQGTFDILHPGHVHYLEEAAAMGDELLVIVARKSNVDHKEKPICPAAQRRDVVAALEAVDDAIVGHEEDIFAPIEAIDPDVIALGHDQHHDDDAIEAELERRGIDCTVERASAREPEREDEILSTRLIIDRILERRG.

ATP-binding positions include 10–11 (TF), 15–18 (HPGH), and aspartate 93.

The protein belongs to the archaeal FAD synthase family. As to quaternary structure, homodimer. A divalent metal cation serves as cofactor.

The enzyme catalyses FMN + ATP + H(+) = FAD + diphosphate. The protein operates within cofactor biosynthesis; FAD biosynthesis; FAD from FMN: step 1/1. Functionally, catalyzes the transfer of the AMP portion of ATP to flavin mononucleotide (FMN) to produce flavin adenine dinucleotide (FAD) coenzyme. The chain is FAD synthase from Haloterrigena turkmenica (strain ATCC 51198 / DSM 5511 / JCM 9101 / NCIMB 13204 / VKM B-1734 / 4k) (Halococcus turkmenicus).